Reading from the N-terminus, the 848-residue chain is ATP-dependent Clp protease ATP-binding subunit ClpC1 (848 aa).

The 143-residue stretch at Phe-2 to Gly-144 folds into the Clp R domain. Repeat stretches follow at residues Phe-5 to Gly-70 and Phe-80 to Gly-144. The 36-residue stretch at Asp-425–Gln-460 folds into the UVR domain. ATP contacts are provided by residues Gly-553–Thr-560 and Lys-617–Glu-626. The interval Gly-811–Glu-848 is disordered. Low complexity predominate over residues Ala-835 to Glu-848.

This sequence belongs to the ClpA/ClpB family. ClpC subfamily.

Its function is as follows. ATP-dependent specificity component of the Clp protease. It directs the protease to specific substrates. Can perform chaperone functions in the absence of ClpP. Degrades anti-sigma-E factor RseA in the presence of ClpP2. In Mycolicibacterium smegmatis (strain ATCC 700084 / mc(2)155) (Mycobacterium smegmatis), this protein is ATP-dependent Clp protease ATP-binding subunit ClpC1 (clpC1).